The following is a 145-amino-acid chain: Hemoglobin subunit beta (145 aa).

The region spanning 1–145 (MLTSEEKAAV…VANALAHRYH (145 aa)) is the Globin domain. Thr-11 bears the Phosphothreonine mark. Position 58 is an N6-acetyllysine (Lys-58). Residue His-62 coordinates heme b. The residue at position 81 (Lys-81) is an N6-acetyllysine. Residue His-91 coordinates heme b. Cys-92 bears the S-nitrosocysteine mark.

Belongs to the globin family. As to quaternary structure, heterotetramer of two alpha chains and two beta chains. In terms of tissue distribution, red blood cells.

In terms of biological role, involved in oxygen transport from the lung to the various peripheral tissues. The sequence is that of Hemoglobin subunit beta (HBB) from Rangifer tarandus (Reindeer).